A 366-amino-acid chain; its full sequence is Palmitoyltransferase ZDHHC2 (366 aa).

Topologically, residues 1-15 are cytoplasmic; the sequence is MAPSGSGGVRRRCRR. The helical transmembrane segment at 16 to 36 threads the bilayer; that stretch reads VLYWIPVVFISLLLGWSYYAY. At 37–47 the chain is on the lumenal side; sequence AIQLCIVSMEN. A helical transmembrane segment spans residues 48–68; the sequence is IGEQVVCLMAYHLLFAMFVWS. The Cytoplasmic portion of the chain corresponds to 69–169; it reads YWKTIFTLPM…NNCVGFSNYK (101 aa). In terms of domain architecture, DHHC spans 126–176; sequence RYCDRCQLIKPDRCHHCSVCDKCILKMDHHCPWVNNCVGFSNYKFFLLFLA. Cys156 (S-palmitoyl cysteine intermediate) is an active-site residue. A helical membrane pass occupies residues 170-190; that stretch reads FFLLFLAYSLLYCLFIAATDL. Residues 191 to 207 lie on the Lumenal side of the membrane; the sequence is QYFIRFWTNGLPDTQAK. The helical transmembrane segment at 208–228 threads the bilayer; sequence FHIMFLFFAAAMFSVSLSSLF. Topologically, residues 229–366 are cytoplasmic; it reads GYHCWLVSKN…NPALTMENET (138 aa). Polar residues predominate over residues 297 to 316; that stretch reads VNQDPEQPSTPAGLNSTVKN. A disordered region spans residues 297–366; it reads VNQDPEQPST…NPALTMENET (70 aa). Residues 298–366 form a mediates localization to plasma membrane and recycling endosomes region; sequence NQDPEQPSTP…NPALTMENET (69 aa). Positions 326–336 are enriched in basic and acidic residues; it reads PLRESQSHLLK. Residues 334-335 carry the Non-canonical dileucine endocytic signal motif; the sequence is LL. Residues 337–347 are compositionally biased toward polar residues; sequence DSQTWTESSAN. The NPxY-like endocytic signal motif lies at 357–360; the sequence is NPAL.

It belongs to the DHHC palmitoyltransferase family. Monomer. Homodimer. The monomeric form has a higher catalytic activity. In terms of processing, autopalmitoylated. In terms of tissue distribution, expressed in all brain regions.

The protein resides in the postsynaptic density. It localises to the postsynaptic recycling endosome membrane. Its subcellular location is the cell membrane. The protein localises to the endoplasmic reticulum membrane. It is found in the golgi apparatus membrane. The enzyme catalyses L-cysteinyl-[protein] + hexadecanoyl-CoA = S-hexadecanoyl-L-cysteinyl-[protein] + CoA. The catalysed reaction is L-cysteinyl-[protein] + tetradecanoyl-CoA = S-tetradecanoyl-L-cysteinyl-[protein] + CoA. It catalyses the reaction L-cysteinyl-[protein] + octadecanoyl-CoA = S-octadecanoyl-L-cysteinyl-[protein] + CoA. Palmitoyltransferase that catalyzes the addition of palmitate onto various protein substrates and is involved in a variety of cellular processes. Has no stringent fatty acid selectivity and in addition to palmitate can also transfer onto target proteins myristate from tetradecanoyl-CoA and stearate from octadecanoyl-CoA. In the nervous system, plays a role in long term synaptic potentiation by palmitoylating AKAP5 through which it regulates protein trafficking from the dendritic recycling endosomes to the plasma membrane and controls both structural and functional plasticity at excitatory synapses. In dendrites, mediates the palmitoylation of DLG4 when synaptic activity decreases and induces synaptic clustering of DLG4 and associated AMPA-type glutamate receptors. Also mediates the de novo and turnover palmitoylation of RGS7BP, a shuttle for Gi/o-specific GTPase-activating proteins/GAPs, promoting its localization to the plasma membrane in response to the activation of G protein-coupled receptors. Through the localization of these GTPase-activating proteins/GAPs, it also probably plays a role in G protein-coupled receptors signaling in neurons. Also probably plays a role in cell adhesion by palmitoylating CD9 and CD151 to regulate their expression and function. Palmitoylates the endoplasmic reticulum protein CKAP4 and regulates its localization to the plasma membrane. Could also palmitoylate LCK and regulate its localization to the plasma membrane. The chain is Palmitoyltransferase ZDHHC2 from Mus musculus (Mouse).